A 174-amino-acid polypeptide reads, in one-letter code: Serine protease 2 (174 aa).

Residues C15 and C36 are joined by a disulfide bond. Residues H35, D65, and S147 each act as charge relay system in the active site. C141 and C168 are oxidised to a cystine.

The protein belongs to the peptidase S1 family.

It is found in the secreted. Broad substrate specificity. This is Serine protease 2 from Streptomyces fradiae (Streptomyces roseoflavus).